We begin with the raw amino-acid sequence, 273 residues long: Formamidopyrimidine-DNA glycosylase (273 aa).

Residue P2 is the Schiff-base intermediate with DNA of the active site. E3 serves as the catalytic Proton donor. K59 (proton donor; for beta-elimination activity) is an active-site residue. Residues H93, R111, and R154 each coordinate DNA. The FPG-type zinc finger occupies 239-273; it reads KVYGRGGEPCKECGHTLVRIRLAGRSTVFCPCCQV. R263 (proton donor; for delta-elimination activity) is an active-site residue.

It belongs to the FPG family. In terms of assembly, monomer. It depends on Zn(2+) as a cofactor.

The catalysed reaction is Hydrolysis of DNA containing ring-opened 7-methylguanine residues, releasing 2,6-diamino-4-hydroxy-5-(N-methyl)formamidopyrimidine.. It catalyses the reaction 2'-deoxyribonucleotide-(2'-deoxyribose 5'-phosphate)-2'-deoxyribonucleotide-DNA = a 3'-end 2'-deoxyribonucleotide-(2,3-dehydro-2,3-deoxyribose 5'-phosphate)-DNA + a 5'-end 5'-phospho-2'-deoxyribonucleoside-DNA + H(+). Involved in base excision repair of DNA damaged by oxidation or by mutagenic agents. Acts as a DNA glycosylase that recognizes and removes damaged bases. Has a preference for oxidized purines, such as 7,8-dihydro-8-oxoguanine (8-oxoG). Has AP (apurinic/apyrimidinic) lyase activity and introduces nicks in the DNA strand. Cleaves the DNA backbone by beta-delta elimination to generate a single-strand break at the site of the removed base with both 3'- and 5'-phosphates. This is Formamidopyrimidine-DNA glycosylase from Desulfitobacterium hafniense (strain DSM 10664 / DCB-2).